The primary structure comprises 111 residues: Large ribosomal subunit protein uL22 (111 aa).

The protein belongs to the universal ribosomal protein uL22 family. In terms of assembly, part of the 50S ribosomal subunit.

Functionally, this protein binds specifically to 23S rRNA; its binding is stimulated by other ribosomal proteins, e.g. L4, L17, and L20. It is important during the early stages of 50S assembly. It makes multiple contacts with different domains of the 23S rRNA in the assembled 50S subunit and ribosome. The globular domain of the protein is located near the polypeptide exit tunnel on the outside of the subunit, while an extended beta-hairpin is found that lines the wall of the exit tunnel in the center of the 70S ribosome. In Stenotrophomonas maltophilia (strain R551-3), this protein is Large ribosomal subunit protein uL22.